A 643-amino-acid chain; its full sequence is Pesticidal crystal protein Cry11Aa (643 aa).

The protein belongs to the delta endotoxin family.

In terms of biological role, promotes colloidosmotic lysis by binding to the midgut epithelial cells of mosquitos. The protein is Pesticidal crystal protein Cry11Aa (cry11Aa) of Bacillus thuringiensis subsp. israelensis.